We begin with the raw amino-acid sequence, 443 residues long: 3-isopropylmalate dehydratase large subunit (443 aa).

3 residues coordinate [4Fe-4S] cluster: Cys347, Cys407, and Cys410.

Belongs to the aconitase/IPM isomerase family. LeuC type 1 subfamily. In terms of assembly, heterodimer of LeuC and LeuD. [4Fe-4S] cluster serves as cofactor.

It catalyses the reaction (2R,3S)-3-isopropylmalate = (2S)-2-isopropylmalate. Its pathway is amino-acid biosynthesis; L-leucine biosynthesis; L-leucine from 3-methyl-2-oxobutanoate: step 2/4. In terms of biological role, catalyzes the isomerization between 2-isopropylmalate and 3-isopropylmalate, via the formation of 2-isopropylmaleate. This Buchnera aphidicola subsp. Uroleucon aeneum protein is 3-isopropylmalate dehydratase large subunit.